Here is a 272-residue protein sequence, read N- to C-terminus: Shikimate dehydrogenase (NADP(+)) (272 aa).

Shikimate-binding positions include 14 to 16 (SKS) and Thr-61. Lys-65 (proton acceptor) is an active-site residue. An NADP(+)-binding site is contributed by Glu-77. 2 residues coordinate shikimate: Asn-86 and Asp-102. Residues 126-130 (GAGGA), 149-154 (NRTVSR), and Met-213 each bind NADP(+). Tyr-215 is a binding site for shikimate. Position 237 (Gly-237) interacts with NADP(+).

This sequence belongs to the shikimate dehydrogenase family. As to quaternary structure, homodimer.

The catalysed reaction is shikimate + NADP(+) = 3-dehydroshikimate + NADPH + H(+). Its pathway is metabolic intermediate biosynthesis; chorismate biosynthesis; chorismate from D-erythrose 4-phosphate and phosphoenolpyruvate: step 4/7. Involved in the biosynthesis of the chorismate, which leads to the biosynthesis of aromatic amino acids. Catalyzes the reversible NADPH linked reduction of 3-dehydroshikimate (DHSA) to yield shikimate (SA). This Shigella boydii serotype 4 (strain Sb227) protein is Shikimate dehydrogenase (NADP(+)).